A 387-amino-acid polypeptide reads, in one-letter code: Synaptotagmin-8 (387 aa).

Residues 1 to 34 (MGHPPVSPSAPAPAGTTAIPGLIPDLVAGTPWPR) are Extracellular-facing. The helical; Signal-anchor for type III membrane protein transmembrane segment at 35–55 (WALIAGALAAGVLLVSCLLCA) threads the bilayer. Residues 56 to 387 (ACCCCRRHRK…LRLRLPLPHS (332 aa)) are Cytoplasmic-facing. The interval 70-99 (KESVGLGSARGTTTTHLVQPDVDGLESSPG) is disordered. C2 domains follow at residues 103-219 (QWGC…EHWY) and 231-346 (QVGE…QHWA).

The protein belongs to the synaptotagmin family. As to quaternary structure, homodimer or homooligomer. Homodimerization and homooligomerization do not depend on Ca(2+). Interacts with SYNCRIP isoform 2 C-terminus. Binds inositol 1,3,4,5-tetrakisphosphate (IP4). Binds to AP2 in a Ca(2+)-independent manner. Interacts with STX1A, STX1B and STX2; the interaction is Ca(2+)-dependent.

It localises to the cell membrane. Its subcellular location is the cytoplasmic vesicle. The protein localises to the secretory vesicle. It is found in the acrosome. In terms of biological role, involved in the trafficking and exocytosis of secretory vesicles in non-neuronal tissues. Mediates Ca(2+)-regulation of exocytosis acrosomal reaction in sperm. May mediate Ca(2+)-regulation of exocytosis in insulin secreted cells. In Homo sapiens (Human), this protein is Synaptotagmin-8 (SYT8).